Here is a 365-residue protein sequence, read N- to C-terminus: UDP-N-acetylglucosamine--N-acetylmuramyl-(pentapeptide) pyrophosphoryl-undecaprenol N-acetylglucosamine transferase (365 aa).

Residues 19–21 (TGG), N131, R170, S201, I255, 274–279 (ALTVTE), and Q300 contribute to the UDP-N-acetyl-alpha-D-glucosamine site.

The protein belongs to the glycosyltransferase 28 family. MurG subfamily.

Its subcellular location is the cell inner membrane. The catalysed reaction is di-trans,octa-cis-undecaprenyl diphospho-N-acetyl-alpha-D-muramoyl-L-alanyl-D-glutamyl-meso-2,6-diaminopimeloyl-D-alanyl-D-alanine + UDP-N-acetyl-alpha-D-glucosamine = di-trans,octa-cis-undecaprenyl diphospho-[N-acetyl-alpha-D-glucosaminyl-(1-&gt;4)]-N-acetyl-alpha-D-muramoyl-L-alanyl-D-glutamyl-meso-2,6-diaminopimeloyl-D-alanyl-D-alanine + UDP + H(+). It participates in cell wall biogenesis; peptidoglycan biosynthesis. Functionally, cell wall formation. Catalyzes the transfer of a GlcNAc subunit on undecaprenyl-pyrophosphoryl-MurNAc-pentapeptide (lipid intermediate I) to form undecaprenyl-pyrophosphoryl-MurNAc-(pentapeptide)GlcNAc (lipid intermediate II). The sequence is that of UDP-N-acetylglucosamine--N-acetylmuramyl-(pentapeptide) pyrophosphoryl-undecaprenol N-acetylglucosamine transferase from Acinetobacter baumannii (strain ACICU).